Here is an 862-residue protein sequence, read N- to C-terminus: DNA mismatch repair protein MutS (862 aa).

608–615 (GPNMAGKS) is a binding site for ATP.

This sequence belongs to the DNA mismatch repair MutS family.

In terms of biological role, this protein is involved in the repair of mismatches in DNA. It is possible that it carries out the mismatch recognition step. This protein has a weak ATPase activity. The polypeptide is DNA mismatch repair protein MutS (Bacteroides fragilis (strain YCH46)).